Reading from the N-terminus, the 515-residue chain is 2,3-bisphosphoglycerate-independent phosphoglycerate mutase (515 aa).

Mn(2+) is bound by residues D17 and S67. The Phosphoserine intermediate role is filled by S67. Substrate is bound by residues H128, 157–158 (RD), R190, R196, 262–265 (RADR), and K336. 5 residues coordinate Mn(2+): D403, H407, D444, H445, and H463.

This sequence belongs to the BPG-independent phosphoglycerate mutase family. In terms of assembly, monomer. The cofactor is Mn(2+).

It catalyses the reaction (2R)-2-phosphoglycerate = (2R)-3-phosphoglycerate. Its pathway is carbohydrate degradation; glycolysis; pyruvate from D-glyceraldehyde 3-phosphate: step 3/5. In terms of biological role, catalyzes the interconversion of 2-phosphoglycerate and 3-phosphoglycerate. The chain is 2,3-bisphosphoglycerate-independent phosphoglycerate mutase from Acinetobacter baylyi (strain ATCC 33305 / BD413 / ADP1).